A 590-amino-acid polypeptide reads, in one-letter code: Aspartate--tRNA(Asp/Asn) ligase (590 aa).

Glu-172 lines the L-aspartate pocket. The aspartate stretch occupies residues 196–199 (QLFK). Arg-218 serves as a coordination point for L-aspartate. Residues 218–220 (RDE) and Gln-227 each bind ATP. L-aspartate is bound at residue His-449. Glu-484 is an ATP binding site. Arg-491 contributes to the L-aspartate binding site. 536-539 (GVDR) is an ATP binding site.

It belongs to the class-II aminoacyl-tRNA synthetase family. Type 1 subfamily. As to quaternary structure, homodimer.

Its subcellular location is the cytoplasm. It catalyses the reaction tRNA(Asx) + L-aspartate + ATP = L-aspartyl-tRNA(Asx) + AMP + diphosphate. Functionally, aspartyl-tRNA synthetase with relaxed tRNA specificity since it is able to aspartylate not only its cognate tRNA(Asp) but also tRNA(Asn). Reaction proceeds in two steps: L-aspartate is first activated by ATP to form Asp-AMP and then transferred to the acceptor end of tRNA(Asp/Asn). This Francisella tularensis subsp. tularensis (strain WY96-3418) protein is Aspartate--tRNA(Asp/Asn) ligase.